We begin with the raw amino-acid sequence, 388 residues long: Chorismate synthase (388 aa).

The NADP(+) site is built by R39 and R45. FMN is bound by residues R130–S132, N251–A252, G296, K311–T315, and R337.

Belongs to the chorismate synthase family. As to quaternary structure, homotetramer. FMNH2 is required as a cofactor.

It catalyses the reaction 5-O-(1-carboxyvinyl)-3-phosphoshikimate = chorismate + phosphate. Its pathway is metabolic intermediate biosynthesis; chorismate biosynthesis; chorismate from D-erythrose 4-phosphate and phosphoenolpyruvate: step 7/7. Its function is as follows. Catalyzes the anti-1,4-elimination of the C-3 phosphate and the C-6 proR hydrogen from 5-enolpyruvylshikimate-3-phosphate (EPSP) to yield chorismate, which is the branch point compound that serves as the starting substrate for the three terminal pathways of aromatic amino acid biosynthesis. This reaction introduces a second double bond into the aromatic ring system. In Streptococcus mutans serotype c (strain ATCC 700610 / UA159), this protein is Chorismate synthase.